Consider the following 107-residue polypeptide: uncharacterized protein (107 aa).

A helical membrane pass occupies residues 37 to 59 (MVFSFLTVMPGDFIKCLFLRFFV).

The protein resides in the membrane. This is an uncharacterized protein from Saccharomyces cerevisiae (strain ATCC 204508 / S288c) (Baker's yeast).